The following is a 322-amino-acid chain: MMESGEALLKKLDGRLSGLRGRLTPDTGMDKITWFRAGGPAQVLFQPSDEEDLSAFLKAVPEEIPLLVVGIGSNLLVRDGGVPGFVVRLSAKGFGEVEQVCDTQLRAGAAAPDKRVAAAALEAGLAGFHFYHGIPGGIGGALRMNAGANGVETRERVVEVRALDRKGEVHVLSNADMGYAYRHSSASPDLIFTSVLFEGVPGERDDIRRAMDEVQHHRETVQPVREKTGGSTFKNPEGTSAWKEIDKAGCRGLRVGGAQMSEMHCNFMINTGNATGHDLETLGETVRARVFENSGIRLHWEIKRLGLFREGEQIEEFLGKIV.

Residues 36-202 form the FAD-binding PCMH-type domain; it reads RAGGPAQVLF…TSVLFEGVPG (167 aa). Arg182 is an active-site residue. The active-site Proton donor is Ser231. Residue Glu301 is part of the active site.

The protein belongs to the MurB family. It depends on FAD as a cofactor.

The protein resides in the cytoplasm. It carries out the reaction UDP-N-acetyl-alpha-D-muramate + NADP(+) = UDP-N-acetyl-3-O-(1-carboxyvinyl)-alpha-D-glucosamine + NADPH + H(+). Its pathway is cell wall biogenesis; peptidoglycan biosynthesis. Functionally, cell wall formation. The sequence is that of UDP-N-acetylenolpyruvoylglucosamine reductase from Brucella melitensis biotype 2 (strain ATCC 23457).